Here is a 217-residue protein sequence, read N- to C-terminus: 3,4-dihydroxy-2-butanone 4-phosphate synthase (217 aa).

D-ribulose 5-phosphate contacts are provided by residues 37-38, D42, 150-154, and E174; these read RE and RGGHT. A Mg(2+)-binding site is contributed by E38. H153 provides a ligand contact to Mg(2+).

Belongs to the DHBP synthase family. As to quaternary structure, homodimer. The cofactor is Mg(2+). Mn(2+) serves as cofactor.

The catalysed reaction is D-ribulose 5-phosphate = (2S)-2-hydroxy-3-oxobutyl phosphate + formate + H(+). It participates in cofactor biosynthesis; riboflavin biosynthesis; 2-hydroxy-3-oxobutyl phosphate from D-ribulose 5-phosphate: step 1/1. Its function is as follows. Catalyzes the conversion of D-ribulose 5-phosphate to formate and 3,4-dihydroxy-2-butanone 4-phosphate. This chain is 3,4-dihydroxy-2-butanone 4-phosphate synthase, found in Pectobacterium carotovorum subsp. carotovorum (strain PC1).